We begin with the raw amino-acid sequence, 356 residues long: UDP-N-acetylglucosamine--N-acetylmuramyl-(pentapeptide) pyrophosphoryl-undecaprenol N-acetylglucosamine transferase (356 aa).

UDP-N-acetyl-alpha-D-glucosamine is bound by residues 12 to 14 (TGG), asparagine 124, arginine 163, serine 188, isoleucine 242, 261 to 266 (ALTVSE), and glutamine 287.

It belongs to the glycosyltransferase 28 family. MurG subfamily.

The protein resides in the cell inner membrane. The catalysed reaction is di-trans,octa-cis-undecaprenyl diphospho-N-acetyl-alpha-D-muramoyl-L-alanyl-D-glutamyl-meso-2,6-diaminopimeloyl-D-alanyl-D-alanine + UDP-N-acetyl-alpha-D-glucosamine = di-trans,octa-cis-undecaprenyl diphospho-[N-acetyl-alpha-D-glucosaminyl-(1-&gt;4)]-N-acetyl-alpha-D-muramoyl-L-alanyl-D-glutamyl-meso-2,6-diaminopimeloyl-D-alanyl-D-alanine + UDP + H(+). Its pathway is cell wall biogenesis; peptidoglycan biosynthesis. Its function is as follows. Cell wall formation. Catalyzes the transfer of a GlcNAc subunit on undecaprenyl-pyrophosphoryl-MurNAc-pentapeptide (lipid intermediate I) to form undecaprenyl-pyrophosphoryl-MurNAc-(pentapeptide)GlcNAc (lipid intermediate II). This Pseudomonas fluorescens (strain SBW25) protein is UDP-N-acetylglucosamine--N-acetylmuramyl-(pentapeptide) pyrophosphoryl-undecaprenol N-acetylglucosamine transferase.